A 574-amino-acid polypeptide reads, in one-letter code: MKTIIINGVQFNTDEDTTILKFARDNNIDISALCFLNNCNNDINKCEICTVEVEGTGLVTACDTLIEDGMIINTNSDAVNEKIKSRISQLLDIHEFKCGPCNRRENCEFLKLVIKYKARASKPFLPKDKTEYVDERSKSLTVDRTKCLLCGRCVNACGKNTETYAMKFLNKNGKTIIGAEDEKCFDDTNCLLCGQCIIACPVAALSEKSHMDRVKNALNAPEKHVIVAMAPSVRASIGELFNMGFGVDVTGKIYTALRQLGFDKIFDINFGADMTIMEEATELVQRIENNGPFPMFTSCCPGWVRQAENYYPELLNNLSSAKSPQQIFGTASKTYYPSISGLDPKNVFTVTVMPCTSKKFEADRPQMEKDGLRDIDAVITTRELAKMIKDAKIPFAKLEDSEADPAMGEYSGAGAIFGATGGVMEAALRSAKDFAENAELEDIEYKQVRGLNGIKEAEVEINNNKYNVAVINGASNLFKFMKSGMINEKQYHFIEVMACHGGCVNGGGQPHVNPKDLEKVDIKKVRASVLYNQDEHLSKRKSHENTALVKMYQNYFGKPGEGRAHEILHFKYKK.

Positions 1-78 (MKTIIINGVQ…GMIINTNSDA (78 aa)) constitute a 2Fe-2S ferredoxin-type domain. 4 residues coordinate [2Fe-2S] cluster: cysteine 34, cysteine 46, cysteine 49, and cysteine 62. The 4Fe-4S His(Cys)3-ligated-type domain occupies 78–117 (AVNEKIKSRISQLLDIHEFKCGPCNRRENCEFLKLVIKYK). The [4Fe-4S] cluster site is built by histidine 94, cysteine 98, cysteine 101, cysteine 107, cysteine 147, cysteine 150, cysteine 153, cysteine 157, cysteine 190, cysteine 193, cysteine 196, cysteine 200, cysteine 300, cysteine 355, cysteine 499, and cysteine 503. 4Fe-4S ferredoxin-type domains lie at 138–167 (KSLTVDRTKCLLCGRCVNACGKNTETYAMK) and 181–210 (DEKCFDDTNCLLCGQCIIACPVAALSEKSH). Cysteine 503 serves as a coordination point for Fe(2+).

In terms of assembly, monomer. It depends on [2Fe-2S] cluster as a cofactor. [4Fe-4S] cluster serves as cofactor. Fe(2+) is required as a cofactor.

The enzyme catalyses H2 + 2 oxidized [2Fe-2S]-[ferredoxin] = 2 reduced [2Fe-2S]-[ferredoxin] + 2 H(+). The polypeptide is Iron hydrogenase 1 (Clostridium pasteurianum).